Here is a 51-residue protein sequence, read N- to C-terminus: Large ribosomal subunit protein eL39 (51 aa).

The protein belongs to the eukaryotic ribosomal protein eL39 family. In terms of assembly, interacts with YIH1.

The chain is Large ribosomal subunit protein eL39 (RPL39) from Kluyveromyces lactis (strain ATCC 8585 / CBS 2359 / DSM 70799 / NBRC 1267 / NRRL Y-1140 / WM37) (Yeast).